Reading from the N-terminus, the 340-residue chain is Dihydroorotate dehydrogenase (quinone) (340 aa).

FMN is bound by residues 67 to 71 (AGFDK) and threonine 91. Lysine 71 serves as a coordination point for substrate. 116 to 120 (NRMGF) is a binding site for substrate. Asparagine 143 and asparagine 176 together coordinate FMN. Asparagine 176 provides a ligand contact to substrate. The active-site Nucleophile is serine 179. A substrate-binding site is contributed by asparagine 181. FMN-binding residues include lysine 217 and threonine 245. 246 to 247 (NT) contributes to the substrate binding site. FMN-binding positions include glycine 267, glycine 296, and 317-318 (YT).

This sequence belongs to the dihydroorotate dehydrogenase family. Type 2 subfamily. Monomer. It depends on FMN as a cofactor.

The protein localises to the cell membrane. The catalysed reaction is (S)-dihydroorotate + a quinone = orotate + a quinol. It participates in pyrimidine metabolism; UMP biosynthesis via de novo pathway; orotate from (S)-dihydroorotate (quinone route): step 1/1. Catalyzes the conversion of dihydroorotate to orotate with quinone as electron acceptor. The sequence is that of Dihydroorotate dehydrogenase (quinone) from Christiangramia forsetii (strain DSM 17595 / CGMCC 1.15422 / KT0803) (Gramella forsetii).